Here is a 218-residue protein sequence, read N- to C-terminus: Interleukin-37 (218 aa).

The interval 1–40 (MSFVGENSGVKMGSEDWEKDEPQCCLEDPAGSPLEPGPSL) is disordered. Positions 1-45 (MSFVGENSGVKMGSEDWEKDEPQCCLEDPAGSPLEPGPSLPTMNF) are cleaved as a propeptide — removed in mature form. The segment covering 13–22 (GSEDWEKDEP) has biased composition (basic and acidic residues).

The protein belongs to the IL-1 family. As to quaternary structure, interacts with SMAD3. Binds IL18R1, but not to IL1R1, with lower affinity than IL18, and does not seem to act as a receptor antagonist for IL18. Interacts with cargo receptor TMED10; the interaction mediates the translocation from the cytoplasm into the ERGIC (endoplasmic reticulum-Golgi intermediate compartment) and thereby secretion. Post-translationally, proteolytically converted to the mature form by CASP1. As to expression, in general, low constitutive expression, if any, in healthy tissues; high expression in inflammatory counterparts, including in synovial tissues from individuals with active rheumatoid arthritis. Isoform A, isoform B and isoform C are expressed in testis, colon, placenta, lung and lymph node. Isoform D and isoform E were found only in testis and bone marrow. Whereas only isoform A is found in brain, only isoform B in kidney and only isoform C in heart.

The protein localises to the cytoplasm. It localises to the cytosol. The protein resides in the nucleus. It is found in the secreted. In terms of biological role, immune regulatory cytokine that acts as a suppressor of innate inflammatory and immune responses involved in curbing excessive inflammation. Signaling can occur via two mechanisms, intracellularly through nuclear translocation with SMAD3 and extracellularly after secretion and binding to its receptor composed of IL18R1 and IL18RAP. Suppresses, or reduces, pro-inflammatory cytokine production, including IL1A and IL6, as well as CCL12, CSF1, CSF2, CXCL13, IL1B, IL23A and IL1RN, but spares anti-inflammatory cytokines. Inhibits dendritic cell activation. The polypeptide is Interleukin-37 (Homo sapiens (Human)).